Reading from the N-terminus, the 152-residue chain is Transcriptional regulator MraZ (152 aa).

2 consecutive SpoVT-AbrB domains span residues 5–52 and 81–124; these read ATLV…PLPE and ASEC…DETT.

It belongs to the MraZ family. Forms oligomers.

It is found in the cytoplasm. It localises to the nucleoid. Negatively regulates its own expression and that of the subsequent genes in the proximal part of the division and cell wall (dcw) gene cluster. Acts by binding directly to DNA. May also regulate the expression of genes outside the dcw cluster. The chain is Transcriptional regulator MraZ from Shigella sonnei (strain Ss046).